Here is a 339-residue protein sequence, read N- to C-terminus: DNA-directed RNA polymerase subunit alpha (339 aa).

Residues Met-1–Glu-233 form an alpha N-terminal domain (alpha-NTD) region. The alpha C-terminal domain (alpha-CTD) stretch occupies residues Lys-264–Phe-339.

This sequence belongs to the RNA polymerase alpha chain family. In terms of assembly, in plastids the minimal PEP RNA polymerase catalytic core is composed of four subunits: alpha, beta, beta', and beta''. When a (nuclear-encoded) sigma factor is associated with the core the holoenzyme is formed, which can initiate transcription.

It is found in the plastid. The protein localises to the chloroplast. The enzyme catalyses RNA(n) + a ribonucleoside 5'-triphosphate = RNA(n+1) + diphosphate. In terms of biological role, DNA-dependent RNA polymerase catalyzes the transcription of DNA into RNA using the four ribonucleoside triphosphates as substrates. In Psathyrostachys fragilis (Russian wild rye), this protein is DNA-directed RNA polymerase subunit alpha.